The chain runs to 335 residues: Beta-hexosaminidase (335 aa).

Residues D60, R68, R133, and 163–164 each bind substrate; that span reads KH. Residue H176 is the Proton donor/acceptor of the active site. The active-site Nucleophile is D247.

It belongs to the glycosyl hydrolase 3 family. NagZ subfamily.

The protein localises to the cytoplasm. The catalysed reaction is Hydrolysis of terminal non-reducing N-acetyl-D-hexosamine residues in N-acetyl-beta-D-hexosaminides.. It functions in the pathway cell wall biogenesis; peptidoglycan recycling. Its function is as follows. Plays a role in peptidoglycan recycling by cleaving the terminal beta-1,4-linked N-acetylglucosamine (GlcNAc) from peptide-linked peptidoglycan fragments, giving rise to free GlcNAc, anhydro-N-acetylmuramic acid and anhydro-N-acetylmuramic acid-linked peptides. This chain is Beta-hexosaminidase, found in Xylella fastidiosa (strain M23).